Reading from the N-terminus, the 313-residue chain is Dihydroorotate dehydrogenase (fumarate) (313 aa).

Residues A20 and 44–45 contribute to the FMN site; that span reads KS. Substrate-binding positions include K44, 68-72, and N128; that span reads NSMGL. N128 contacts FMN. The Nucleophile role is filled by C131. Position 133 (N133) interacts with substrate. K165 and V194 together coordinate FMN. A substrate-binding site is contributed by 195–196; that stretch reads NS. FMN-binding positions include G223, C249, 249 to 251, and 272 to 273; these read CGG and GT.

This sequence belongs to the dihydroorotate dehydrogenase family. Type 1 subfamily. In terms of assembly, homodimer. FMN serves as cofactor.

It localises to the cytoplasm. The catalysed reaction is (S)-dihydroorotate + fumarate = orotate + succinate. The protein operates within pyrimidine metabolism; UMP biosynthesis via de novo pathway. In terms of biological role, catalyzes the conversion of dihydroorotate to orotate with fumarate as the electron acceptor. Molecular oxygen can replace fumarate in vitro. The protein is Dihydroorotate dehydrogenase (fumarate) of Trypanosoma brucei brucei (strain 927/4 GUTat10.1).